A 744-amino-acid chain; its full sequence is Catalase-peroxidase 3 (744 aa).

The segment at residues 106–228 is a cross-link (tryptophyl-tyrosyl-methioninium (Trp-Tyr) (with M-254)); it reads WHFAGTYRIG…LAASEMGLIY (123 aa). H107 serves as the catalytic Proton acceptor. Positions 228 to 254 form a cross-link, tryptophyl-tyrosyl-methioninium (Tyr-Met) (with W-106); sequence YVDPQGPATLPDPLASARDIRETFRRM. Position 269 (H269) interacts with heme b.

This sequence belongs to the peroxidase family. Peroxidase/catalase subfamily. In terms of assembly, homodimer or homotetramer. Heme b serves as cofactor. In terms of processing, formation of the three residue Trp-Tyr-Met cross-link is important for the catalase, but not the peroxidase activity of the enzyme.

It catalyses the reaction H2O2 + AH2 = A + 2 H2O. The enzyme catalyses 2 H2O2 = O2 + 2 H2O. Functionally, bifunctional enzyme with both catalase and broad-spectrum peroxidase activity. This is Catalase-peroxidase 3 from Mycolicibacterium smegmatis (strain ATCC 700084 / mc(2)155) (Mycobacterium smegmatis).